The chain runs to 835 residues: Phenylalanine--tRNA ligase beta subunit (835 aa).

The tRNA-binding domain maps to 44 to 160; that stretch reads PATTGPLVLG…ESGQPGDDAR (117 aa). Positions 419 to 494 constitute a B5 domain; sequence PTMPSITMPV…RLEGLEAIPT (76 aa). Residues Asp-472, Asp-478, Glu-481, and Glu-482 each contribute to the Mg(2+) site. An FDX-ACB domain is found at 741–834; it reads SAFPALHQDI…AKERLGAEMR (94 aa).

The protein belongs to the phenylalanyl-tRNA synthetase beta subunit family. Type 1 subfamily. As to quaternary structure, tetramer of two alpha and two beta subunits. Requires Mg(2+) as cofactor.

The protein resides in the cytoplasm. The catalysed reaction is tRNA(Phe) + L-phenylalanine + ATP = L-phenylalanyl-tRNA(Phe) + AMP + diphosphate + H(+). This chain is Phenylalanine--tRNA ligase beta subunit, found in Corynebacterium efficiens (strain DSM 44549 / YS-314 / AJ 12310 / JCM 11189 / NBRC 100395).